We begin with the raw amino-acid sequence, 152 residues long: UPF0266 membrane protein YobD (152 aa).

The next 3 membrane-spanning stretches (helical) occupy residues 6–26 (LVLI…QFIM), 45–65 (IDSV…VTNH), and 67–87 (ALIT…IFWI).

It belongs to the UPF0266 family.

The protein localises to the cell inner membrane. The protein is UPF0266 membrane protein YobD of Shigella boydii serotype 18 (strain CDC 3083-94 / BS512).